An 88-amino-acid polypeptide reads, in one-letter code: Sec-independent protein translocase protein TatA (88 aa).

A helical membrane pass occupies residues 1 to 21 (MGGISIWQLLIIALIVVLLFG). The tract at residues 43-88 (MSSEEDKKALEDAEAAKPVQTAQTVQSAQPTQQATEKKPESNKEQA) is disordered. Positions 46 to 57 (EEDKKALEDAEA) are enriched in basic and acidic residues. A compositionally biased stretch (polar residues) spans 62 to 76 (QTAQTVQSAQPTQQA). The span at 77-88 (TEKKPESNKEQA) shows a compositional bias: basic and acidic residues.

The protein belongs to the TatA/E family. As to quaternary structure, the Tat system comprises two distinct complexes: a TatABC complex, containing multiple copies of TatA, TatB and TatC subunits, and a separate TatA complex, containing only TatA subunits. Substrates initially bind to the TatABC complex, which probably triggers association of the separate TatA complex to form the active translocon.

It is found in the cell inner membrane. Its function is as follows. Part of the twin-arginine translocation (Tat) system that transports large folded proteins containing a characteristic twin-arginine motif in their signal peptide across membranes. TatA could form the protein-conducting channel of the Tat system. The sequence is that of Sec-independent protein translocase protein TatA from Shewanella oneidensis (strain ATCC 700550 / JCM 31522 / CIP 106686 / LMG 19005 / NCIMB 14063 / MR-1).